Here is a 177-residue protein sequence, read N- to C-terminus: 3-hydroxydecanoyl-[acyl-carrier-protein] dehydratase (177 aa).

H76 is an active-site residue.

Belongs to the thioester dehydratase family. FabA subfamily. As to quaternary structure, homodimer.

The protein localises to the cytoplasm. It catalyses the reaction a (3R)-hydroxyacyl-[ACP] = a (2E)-enoyl-[ACP] + H2O. The enzyme catalyses (3R)-hydroxydecanoyl-[ACP] = (2E)-decenoyl-[ACP] + H2O. The catalysed reaction is (2E)-decenoyl-[ACP] = (3Z)-decenoyl-[ACP]. Its pathway is lipid metabolism; fatty acid biosynthesis. In terms of biological role, necessary for the introduction of cis unsaturation into fatty acids. Catalyzes the dehydration of (3R)-3-hydroxydecanoyl-ACP to E-(2)-decenoyl-ACP and then its isomerization to Z-(3)-decenoyl-ACP. Can catalyze the dehydratase reaction for beta-hydroxyacyl-ACPs with saturated chain lengths up to 16:0, being most active on intermediate chain length. The chain is 3-hydroxydecanoyl-[acyl-carrier-protein] dehydratase from Haemophilus influenzae (strain PittGG).